We begin with the raw amino-acid sequence, 145 residues long: Cuticle protein 7 (145 aa).

Residues 41–114 form the Chitin-binding type R&amp;R domain; it reads PVNVATSYHA…VASNALPVGP (74 aa).

The protein is Cuticle protein 7 of Blaberus craniifer (Death's head cockroach).